The chain runs to 1155 residues: Probable translation initiation factor IF-2 (1155 aa).

Residues 237–367 (FAGVMFGDGC…LSILLLRFEI (131 aa)) form the DOD-type homing endonuclease domain. One can recognise a tr-type G domain in the interval 561–781 (TTETHNFIAN…VAGLAQKFLE (221 aa)). Residues 634–638 (DTPGH) and 688–691 (NKID) contribute to the GTP site.

The protein belongs to the TRAFAC class translation factor GTPase superfamily. Classic translation factor GTPase family. IF-2 subfamily. This protein undergoes a protein self splicing that involves a post-translational excision of the intervening region (intein) followed by peptide ligation.

Function in general translation initiation by promoting the binding of the formylmethionine-tRNA to ribosomes. Seems to function along with eIF-2. In Methanocaldococcus jannaschii (strain ATCC 43067 / DSM 2661 / JAL-1 / JCM 10045 / NBRC 100440) (Methanococcus jannaschii), this protein is Probable translation initiation factor IF-2 (infB).